Consider the following 414-residue polypeptide: Cytochrome c-554 (414 aa).

A signal peptide spans 1–24; that stretch reads MQSSRPSDRQLAIVVSVAVGIVVA. Residues Met110, Cys131, Cys134, His135, Met154, Cys179, Cys182, His183, Met283, Cys294, Cys297, His298, Cys378, Cys381, and His382 each contribute to the heme site.

In terms of processing, binds 4 heme groups per subunit. The N-terminus is blocked.

The protein resides in the periplasm. Functionally, serves as the immediate electron donor to the oxidized BChl2 (bacteriochlorophyll dimer) that is oxidized in the first step of light-induced charge separation. Can also oxidize low-potential substrates. The polypeptide is Cytochrome c-554 (puf2C) (Chloroflexus aurantiacus (strain ATCC 29366 / DSM 635 / J-10-fl)).